The chain runs to 168 residues: Large ribosomal subunit protein uL5 (168 aa).

It belongs to the universal ribosomal protein uL5 family. In terms of assembly, part of the 50S ribosomal subunit; contacts the 5S rRNA and probably tRNA. Forms a bridge to the 30S subunit in the 70S ribosome.

Functionally, this is one of the proteins that bind and probably mediate the attachment of the 5S RNA into the large ribosomal subunit, where it forms part of the central protuberance. In the 70S ribosome it contacts protein S13 of the 30S subunit (bridge B1b), connecting the 2 subunits; this bridge is implicated in subunit movement. May contact the P site tRNA; the 5S rRNA and some of its associated proteins might help stabilize positioning of ribosome-bound tRNAs. In Methanosphaera stadtmanae (strain ATCC 43021 / DSM 3091 / JCM 11832 / MCB-3), this protein is Large ribosomal subunit protein uL5.